The primary structure comprises 105 residues: Large ribosomal subunit protein uL24 (105 aa).

The protein belongs to the universal ribosomal protein uL24 family. In terms of assembly, part of the 50S ribosomal subunit.

Its function is as follows. One of two assembly initiator proteins, it binds directly to the 5'-end of the 23S rRNA, where it nucleates assembly of the 50S subunit. Functionally, one of the proteins that surrounds the polypeptide exit tunnel on the outside of the subunit. This Francisella tularensis subsp. novicida (strain U112) protein is Large ribosomal subunit protein uL24.